Here is an 89-residue protein sequence, read N- to C-terminus: Small ribosomal subunit protein uS15 (89 aa).

It belongs to the universal ribosomal protein uS15 family. Part of the 30S ribosomal subunit. Forms a bridge to the 50S subunit in the 70S ribosome, contacting the 23S rRNA.

Its function is as follows. One of the primary rRNA binding proteins, it binds directly to 16S rRNA where it helps nucleate assembly of the platform of the 30S subunit by binding and bridging several RNA helices of the 16S rRNA. In terms of biological role, forms an intersubunit bridge (bridge B4) with the 23S rRNA of the 50S subunit in the ribosome. This Chlamydia felis (strain Fe/C-56) (Chlamydophila felis) protein is Small ribosomal subunit protein uS15.